A 208-amino-acid chain; its full sequence is Translation initiation factor 2 subunit beta (208 aa).

One can recognise a TRAM domain in the interval 145–203 (VIEEGETYELRIESVGSKGDGIAKVDKYLIFVPNTSKGEIVKAKVKKISGTLAFAEIVE).

It belongs to the eIF-2-beta/eIF-5 family. Heterotrimer composed of an alpha, a beta and a gamma chain.

Its function is as follows. eIF-2 functions in the early steps of protein synthesis by forming a ternary complex with GTP and initiator tRNA. This Methanothrix thermoacetophila (strain DSM 6194 / JCM 14653 / NBRC 101360 / PT) (Methanosaeta thermophila) protein is Translation initiation factor 2 subunit beta.